The sequence spans 284 residues: ATP phosphoribosyltransferase (284 aa).

This sequence belongs to the ATP phosphoribosyltransferase family. Long subfamily. In terms of assembly, equilibrium between an active dimeric form, an inactive hexameric form and higher aggregates. Interconversion between the various forms is largely reversible and is influenced by the natural substrates and inhibitors of the enzyme. Mg(2+) is required as a cofactor.

The protein localises to the cytoplasm. It carries out the reaction 1-(5-phospho-beta-D-ribosyl)-ATP + diphosphate = 5-phospho-alpha-D-ribose 1-diphosphate + ATP. It functions in the pathway amino-acid biosynthesis; L-histidine biosynthesis; L-histidine from 5-phospho-alpha-D-ribose 1-diphosphate: step 1/9. Feedback inhibited by histidine. Its function is as follows. Catalyzes the condensation of ATP and 5-phosphoribose 1-diphosphate to form N'-(5'-phosphoribosyl)-ATP (PR-ATP). Has a crucial role in the pathway because the rate of histidine biosynthesis seems to be controlled primarily by regulation of HisG enzymatic activity. This is ATP phosphoribosyltransferase (hisG) from Mycobacterium bovis (strain ATCC BAA-935 / AF2122/97).